A 248-amino-acid polypeptide reads, in one-letter code: Probable proteasome subunit alpha type-3 (248 aa).

This sequence belongs to the peptidase T1A family. In terms of assembly, the 26S proteasome consists of a 20S proteasome core and two 19S regulatory subunits. The 20S proteasome core is composed of 28 subunits that are arranged in four stacked rings, resulting in a barrel-shaped structure. The two end rings are each formed by seven alpha subunits, and the two central rings are each formed by seven beta subunits. The catalytic chamber with the active sites is on the inside of the barrel.

The protein localises to the cytoplasm. It localises to the nucleus. Functionally, the proteasome is a multicatalytic proteinase complex which is characterized by its ability to cleave peptides with Arg, Phe, Tyr, Leu, and Glu adjacent to the leaving group at neutral or slightly basic pH. The proteasome has an ATP-dependent proteolytic activity. The protein is Probable proteasome subunit alpha type-3 of Schizosaccharomyces pombe (strain 972 / ATCC 24843) (Fission yeast).